The primary structure comprises 246 residues: UDP-N-acetyl-D-mannosaminuronic acid transferase (246 aa).

Belongs to the glycosyltransferase 26 family.

It catalyses the reaction UDP-N-acetyl-alpha-D-mannosaminouronate + N-acetyl-alpha-D-glucosaminyl-di-trans,octa-cis-undecaprenyl diphosphate = beta-D-ManNAcA-(1-&gt;4)-alpha-D-GlcNAc-di-trans,octa-cis-undecaprenyl diphosphate + UDP + H(+). It functions in the pathway bacterial outer membrane biogenesis; enterobacterial common antigen biosynthesis. In terms of biological role, catalyzes the synthesis of Und-PP-GlcNAc-ManNAcA (Lipid II), the second lipid-linked intermediate involved in enterobacterial common antigen (ECA) synthesis. This is UDP-N-acetyl-D-mannosaminuronic acid transferase from Escherichia coli O157:H7.